The sequence spans 80 residues: Exodeoxyribonuclease 7 small subunit (80 aa).

It belongs to the XseB family. Heterooligomer composed of large and small subunits.

It localises to the cytoplasm. The catalysed reaction is Exonucleolytic cleavage in either 5'- to 3'- or 3'- to 5'-direction to yield nucleoside 5'-phosphates.. In terms of biological role, bidirectionally degrades single-stranded DNA into large acid-insoluble oligonucleotides, which are then degraded further into small acid-soluble oligonucleotides. The polypeptide is Exodeoxyribonuclease 7 small subunit (Rickettsia bellii (strain OSU 85-389)).